The following is a 443-amino-acid chain: Glutamate-1-semialdehyde 2,1-aminomutase (443 aa).

An N6-(pyridoxal phosphate)lysine modification is found at lysine 277.

The protein belongs to the class-III pyridoxal-phosphate-dependent aminotransferase family. HemL subfamily. In terms of assembly, homodimer. It depends on pyridoxal 5'-phosphate as a cofactor.

Its subcellular location is the cytoplasm. It carries out the reaction (S)-4-amino-5-oxopentanoate = 5-aminolevulinate. Its pathway is porphyrin-containing compound metabolism; protoporphyrin-IX biosynthesis; 5-aminolevulinate from L-glutamyl-tRNA(Glu): step 2/2. In Pseudarthrobacter chlorophenolicus (strain ATCC 700700 / DSM 12829 / CIP 107037 / JCM 12360 / KCTC 9906 / NCIMB 13794 / A6) (Arthrobacter chlorophenolicus), this protein is Glutamate-1-semialdehyde 2,1-aminomutase.